Reading from the N-terminus, the 120-residue chain is NAD(P)H-quinone oxidoreductase subunit 3, chloroplastic (120 aa).

Helical transmembrane passes span isoleucine 9–glycine 29, methionine 64–methionine 84, and valine 88–leucine 108.

It belongs to the complex I subunit 3 family. NDH is composed of at least 16 different subunits, 5 of which are encoded in the nucleus.

Its subcellular location is the plastid. It localises to the chloroplast thylakoid membrane. It carries out the reaction a plastoquinone + NADH + (n+1) H(+)(in) = a plastoquinol + NAD(+) + n H(+)(out). The enzyme catalyses a plastoquinone + NADPH + (n+1) H(+)(in) = a plastoquinol + NADP(+) + n H(+)(out). Its function is as follows. NDH shuttles electrons from NAD(P)H:plastoquinone, via FMN and iron-sulfur (Fe-S) centers, to quinones in the photosynthetic chain and possibly in a chloroplast respiratory chain. The immediate electron acceptor for the enzyme in this species is believed to be plastoquinone. Couples the redox reaction to proton translocation, and thus conserves the redox energy in a proton gradient. The chain is NAD(P)H-quinone oxidoreductase subunit 3, chloroplastic from Lobularia maritima (Sweet alyssum).